The sequence spans 387 residues: Cysteine desulfurase IscS (387 aa).

Pyridoxal 5'-phosphate contacts are provided by residues 73-74 (AT), N155, Q183, and 203-205 (SAH). K206 is subject to N6-(pyridoxal phosphate)lysine. T241 contacts pyridoxal 5'-phosphate. The Cysteine persulfide intermediate role is filled by C328. C328 contacts [2Fe-2S] cluster.

This sequence belongs to the class-V pyridoxal-phosphate-dependent aminotransferase family. NifS/IscS subfamily. As to quaternary structure, homodimer. Forms a heterotetramer with IscU, interacts with other sulfur acceptors. Pyridoxal 5'-phosphate is required as a cofactor.

It localises to the cytoplasm. It catalyses the reaction (sulfur carrier)-H + L-cysteine = (sulfur carrier)-SH + L-alanine. It functions in the pathway cofactor biosynthesis; iron-sulfur cluster biosynthesis. Master enzyme that delivers sulfur to a number of partners involved in Fe-S cluster assembly, tRNA modification or cofactor biosynthesis. Catalyzes the removal of elemental sulfur atoms from cysteine to produce alanine. Functions as a sulfur delivery protein for Fe-S cluster synthesis onto IscU, an Fe-S scaffold assembly protein, as well as other S acceptor proteins. The chain is Cysteine desulfurase IscS from Helicobacter pylori (strain Shi470).